The sequence spans 353 residues: Phosphoribosylformylglycinamidine cyclo-ligase (353 aa).

It belongs to the AIR synthase family.

Its subcellular location is the cytoplasm. It catalyses the reaction 2-formamido-N(1)-(5-O-phospho-beta-D-ribosyl)acetamidine + ATP = 5-amino-1-(5-phospho-beta-D-ribosyl)imidazole + ADP + phosphate + H(+). It participates in purine metabolism; IMP biosynthesis via de novo pathway; 5-amino-1-(5-phospho-D-ribosyl)imidazole from N(2)-formyl-N(1)-(5-phospho-D-ribosyl)glycinamide: step 2/2. This is Phosphoribosylformylglycinamidine cyclo-ligase from Ralstonia nicotianae (strain ATCC BAA-1114 / GMI1000) (Ralstonia solanacearum).